The sequence spans 335 residues: Acetyl-coenzyme A carboxylase carboxyl transferase subunit alpha (335 aa).

Positions 40 to 294 constitute a CoA carboxyltransferase C-terminal domain; it reads QLETLAARRR…KEAIEKHLNA (255 aa).

This sequence belongs to the AccA family. As to quaternary structure, acetyl-CoA carboxylase is a heterohexamer composed of biotin carboxyl carrier protein (AccB), biotin carboxylase (AccC) and two subunits each of ACCase subunit alpha (AccA) and ACCase subunit beta (AccD).

Its subcellular location is the cytoplasm. It catalyses the reaction N(6)-carboxybiotinyl-L-lysyl-[protein] + acetyl-CoA = N(6)-biotinyl-L-lysyl-[protein] + malonyl-CoA. Its pathway is lipid metabolism; malonyl-CoA biosynthesis; malonyl-CoA from acetyl-CoA: step 1/1. Component of the acetyl coenzyme A carboxylase (ACC) complex. First, biotin carboxylase catalyzes the carboxylation of biotin on its carrier protein (BCCP) and then the CO(2) group is transferred by the carboxyltransferase to acetyl-CoA to form malonyl-CoA. The sequence is that of Acetyl-coenzyme A carboxylase carboxyl transferase subunit alpha from Prochlorococcus marinus (strain AS9601).